The sequence spans 96 residues: uncharacterized protein (96 aa).

The CBS domain occupies 57-96 (MTKKVRTTKKDASISDAAALMDKHNVNRLPVVDENNKLVL).

This is an uncharacterized protein from Methanobacterium ivanovii.